Reading from the N-terminus, the 686-residue chain is Methionine--tRNA ligase (686 aa).

The short motif at 15–25 (PYANGSIHLGH) is the 'HIGH' region element. Cys146, Cys149, Cys159, and Cys162 together coordinate Zn(2+). The 'KMSKS' region signature appears at 332 to 336 (KMSKS). Lys335 serves as a coordination point for ATP. Positions 550–571 (AAAEAAAKEKAEAEKEQASQTE) are disordered. The tRNA-binding domain occupies 585–686 (AFSAVDMRIA…EGAQPGMRVM (102 aa)).

This sequence belongs to the class-I aminoacyl-tRNA synthetase family. MetG type 1 subfamily. As to quaternary structure, homodimer. It depends on Zn(2+) as a cofactor.

Its subcellular location is the cytoplasm. The enzyme catalyses tRNA(Met) + L-methionine + ATP = L-methionyl-tRNA(Met) + AMP + diphosphate. In terms of biological role, is required not only for elongation of protein synthesis but also for the initiation of all mRNA translation through initiator tRNA(fMet) aminoacylation. This is Methionine--tRNA ligase from Vibrio atlanticus (strain LGP32) (Vibrio splendidus (strain Mel32)).